A 127-amino-acid polypeptide reads, in one-letter code: Cyclin-dependent protein kinase inhibitor SIM (127 aa).

A disordered region spans residues 21 to 71 (RANTNRDDDGGGCTTPTSSDHKIPPTTATTPPPPPQKPRPPSTPSSLGIRS). Over residues 50–63 (TPPPPPQKPRPPST) the composition is skewed to pro residues.

As to quaternary structure, interacts with CDKA-1. Interacts with CYCD2-1, CYCD3-2 and CYCD4-1. Interacts with CDKB1-1. Interacts with CPR5. As to expression, expressed in the shoot apical meristem, leaf primordia and the elongation zone of the root.

It is found in the nucleus. Its function is as follows. Cyclin-dependent protein kinase (CDK) inhibitor that functions as a repressor of mitosis in the endoreduplication cell cycle. Inhibits the kinase activity of CYCD3-1/CDKA-1, CYCD2-1/CDKA-1 and CYCB1-1/CDKB1-1 complexes in a dose dependent manner. Cooperates with SMR1 and SMR2 to promote endoreplication during leaf development. Required for normal trichome endoreplicating cell cycles. Positive regulator of effector-triggered immunity (ETI). This Arabidopsis thaliana (Mouse-ear cress) protein is Cyclin-dependent protein kinase inhibitor SIM.